The sequence spans 451 residues: Probable plasmid replicative DNA helicase (451 aa).

One can recognise an SF4 helicase domain in the interval 194 to 451; that stretch reads NDSFYDGLPT…SKFSAIKKVW (258 aa). 225–232 serves as a coordination point for ATP; sequence ARPSIGKT.

Belongs to the helicase family. DnaB subfamily. In terms of assembly, homohexamer.

It carries out the reaction Couples ATP hydrolysis with the unwinding of duplex DNA at the replication fork by translocating in the 5'-3' direction. This creates two antiparallel DNA single strands (ssDNA). The leading ssDNA polymer is the template for DNA polymerase III holoenzyme which synthesizes a continuous strand.. The enzyme catalyses ATP + H2O = ADP + phosphate + H(+). A replicative DNA helicase, it participates in initiation and elongation during DNA replication. Travels ahead of the DNA replisome, separating dsDNA into templates for DNA synthesis. A processive ATP-dependent 5'-3' DNA helicase it has DNA-dependent ATPase activity. This Chlamydia muridarum (strain MoPn / Nigg) protein is Probable plasmid replicative DNA helicase.